A 321-amino-acid polypeptide reads, in one-letter code: Olfactory receptor 51G1 (321 aa).

Topologically, residues 1–27 (MTILLNSSLQRATFFLTGFQGLEGLHG) are extracellular. The N-linked (GlcNAc...) asparagine glycan is linked to Asn6. Residues 28 to 48 (WISIPFCFIYLTVILGNLTIL) form a helical membrane-spanning segment. Over 49–56 (HVICTDAT) the chain is Cytoplasmic. The chain crosses the membrane as a helical span at residues 57 to 77 (LHGPMYYFLGMLAVTDLGLCL). Over 78 to 101 (STLPTVLGIFWFDTREIGIPACFT) the chain is Extracellular. A disulfide bridge connects residues Cys99 and Cys191. A helical transmembrane segment spans residues 102 to 122 (QLFFIHTLSSMESSVLLSMSI). Over 123 to 141 (DRYVAVCNPLHDSTVLTPA) the chain is Cytoplasmic. The helical transmembrane segment at 142–162 (CIVKMGLSSVLRSALLILPLP) threads the bilayer. The Extracellular portion of the chain corresponds to 163 to 198 (FLLKRFQYCHSHVLAHAYCLHLEIMKLACSSIIVNH). Residues 199–219 (IYGLFVVACTVGVDSLLIFLS) traverse the membrane as a helical segment. The Cytoplasmic portion of the chain corresponds to 220–239 (YALILRTVLSIASHQERLRA). The helical transmembrane segment at 240 to 260 (LNTCVSHICAVLLFYIPMIGL) threads the bilayer. Residues 261 to 275 (SLVHRFGEHLPRVVH) are Extracellular-facing. A helical membrane pass occupies residues 276–296 (LFMSYVYLLVPPLMNPIIYSI). The Cytoplasmic segment spans residues 297 to 321 (KTKQIRQRIIKKFQFIKSLRCFWKD).

Belongs to the G-protein coupled receptor 1 family.

It is found in the cell membrane. Functionally, odorant receptor. This Homo sapiens (Human) protein is Olfactory receptor 51G1 (OR51G1).